We begin with the raw amino-acid sequence, 933 residues long: Isoleucine--tRNA ligase (933 aa).

Positions P57–H67 match the 'HIGH' region motif. E554 lines the L-isoleucyl-5'-AMP pocket. A 'KMSKS' region motif is present at residues K595–S599. ATP is bound at residue K598.

It belongs to the class-I aminoacyl-tRNA synthetase family. IleS type 1 subfamily. Monomer.

The protein localises to the cytoplasm. The enzyme catalyses tRNA(Ile) + L-isoleucine + ATP = L-isoleucyl-tRNA(Ile) + AMP + diphosphate. Catalyzes the attachment of isoleucine to tRNA(Ile). As IleRS can inadvertently accommodate and process structurally similar amino acids such as valine, to avoid such errors it has two additional distinct tRNA(Ile)-dependent editing activities. One activity is designated as 'pretransfer' editing and involves the hydrolysis of activated Val-AMP. The other activity is designated 'posttransfer' editing and involves deacylation of mischarged Val-tRNA(Ile). The protein is Isoleucine--tRNA ligase of Streptococcus pyogenes serotype M28 (strain MGAS6180).